A 146-amino-acid chain; its full sequence is Hemoglobin subunit delta (146 aa).

The region spanning 2-146 (HLTGEEKSAV…VATALAHKYH (145 aa)) is the Globin domain. His-63 and His-92 together coordinate heme b.

It belongs to the globin family. As to quaternary structure, heterotetramer of two delta chains and two alpha chains. Red blood cells.

This is Hemoglobin subunit delta (HBD) from Ateles fusciceps (Brown-headed spider monkey).